A 155-amino-acid chain; its full sequence is Small ribosomal subunit protein uS7c (155 aa).

Belongs to the universal ribosomal protein uS7 family. In terms of assembly, part of the 30S ribosomal subunit.

Its subcellular location is the plastid. The protein resides in the chloroplast. Functionally, one of the primary rRNA binding proteins, it binds directly to 16S rRNA where it nucleates assembly of the head domain of the 30S subunit. The protein is Small ribosomal subunit protein uS7c (rps7) of Marchantia polymorpha (Common liverwort).